Consider the following 146-residue polypeptide: Large ribosomal subunit protein uL15 (146 aa).

Residues 1–10 are compositionally biased toward basic and acidic residues; it reads MTIKLHDLKP. The tract at residues 1–52 is disordered; it reads MTIKLHDLKPARGSKTPRTRVGRGEGSKGKTAGRGTKGTKARKNVPVTFEGG.

Belongs to the universal ribosomal protein uL15 family. Part of the 50S ribosomal subunit.

In terms of biological role, binds to the 23S rRNA. This Mycolicibacterium paratuberculosis (strain ATCC BAA-968 / K-10) (Mycobacterium paratuberculosis) protein is Large ribosomal subunit protein uL15.